Consider the following 190-residue polypeptide: Elongation factor P (190 aa).

Lys-34 is modified (N6-(3,6-diaminohexanoyl)-5-hydroxylysine).

Belongs to the elongation factor P family. In terms of processing, may be beta-lysylated on the epsilon-amino group of Lys-34 by the combined action of EpmA and EpmB, and then hydroxylated on the C5 position of the same residue by EpmC (if this protein is present). Lysylation is critical for the stimulatory effect of EF-P on peptide-bond formation. The lysylation moiety may extend toward the peptidyltransferase center and stabilize the terminal 3-CCA end of the tRNA. Hydroxylation of the C5 position on Lys-34 may allow additional potential stabilizing hydrogen-bond interactions with the P-tRNA.

The protein localises to the cytoplasm. It participates in protein biosynthesis; polypeptide chain elongation. Functionally, involved in peptide bond synthesis. Alleviates ribosome stalling that occurs when 3 or more consecutive Pro residues or the sequence PPG is present in a protein, possibly by augmenting the peptidyl transferase activity of the ribosome. Modification of Lys-34 is required for alleviation. This Psychrobacter cryohalolentis (strain ATCC BAA-1226 / DSM 17306 / VKM B-2378 / K5) protein is Elongation factor P.